We begin with the raw amino-acid sequence, 468 residues long: MSMGIRLDEKFQDRRKDGIEDAFMRQAVSSAQNRLRDGRLNAAGELGDWEAFRDHSEEIRQHVLEHLDYYLYQLSENVSKRGGSVFFAETPEEANRYIREVIRSKQAKHVVKSKSMVTEEIGLNEALQEEGCTVVESDLGEWILQLDEDPPSHIVAPALHKDRNAVHETFTAHGYTGSNDPTELGRYARQELRKDFLKAEVGITGCNFAIAESGAVGLVTNEGNGRMVTSLPDTVISVMGMERVVPSYEEFEVLVNMLCRSAVGQRLTSYITTFAGTRAVGEVDGPEEFHLVIVDNKRSNILGTQFQSVLQCIRCAACINVCPVYRHIGGHAYGSIYPGPIGAVLAPLLDGYENYKELPYASSLCGACTEACPVKIPLHELLIEHRRVIVEEKKQSPFVERIAMKGFAVTASSPFLFEAAEHVAPFATSPFATSGQIEKGLPAWTDSKDLPQPNKQTVRDWFKKRGNA.

4Fe-4S ferredoxin-type domains lie at 303-333 (GTQF…GHAY) and 352-381 (YENY…LHEL). 7 residues coordinate [4Fe-4S] cluster: cysteine 312, cysteine 315, cysteine 318, cysteine 322, cysteine 365, cysteine 368, and cysteine 372. A disordered region spans residues 442-468 (PAWTDSKDLPQPNKQTVRDWFKKRGNA). Positions 457–468 (TVRDWFKKRGNA) are enriched in basic and acidic residues.

It belongs to the LutB/YkgF family.

In terms of biological role, is involved in L-lactate degradation and allows cells to grow with lactate as the sole carbon source. Has probably a role as an electron transporter during oxidation of L-lactate. This Exiguobacterium sp. (strain ATCC BAA-1283 / AT1b) protein is Lactate utilization protein B.